The primary structure comprises 564 residues: Ubiquitin carboxyl-terminal hydrolase 39 (564 aa).

The segment at 1–96 (MSSRSKRQSH…VRAKNGRVDS (96 aa)) is disordered. Positions 28–39 (IKKERDREKEPE) are enriched in basic and acidic residues. A Phosphoserine modification is found at Ser-46. Residue Lys-51 forms a Glycyl lysine isopeptide (Lys-Gly) (interchain with G-Cter in SUMO2) linkage. Residues 59-69 (REVPAPALPVV) show a composition bias toward low complexity. Ser-81 is modified (phosphoserine). A compositionally biased stretch (basic and acidic residues) spans 84–96 (EREVRAKNGRVDS). The segment at 102–199 (RHCPYLDTIN…YVLKPTFTKQ (98 aa)) adopts a UBP-type; degenerate zinc-finger fold. Zn(2+) is bound by residues Cys-135, Cys-138, His-154, and His-160. The USP domain maps to 224–554 (VGLNNIKAND…EAYIQIWKRR (331 aa)).

The protein belongs to the peptidase C19 family. As to quaternary structure, the U4/U6-U5 tri-snRNP complex is a building block of the precatalytic spliceosome (spliceosome B complex). Component of the U4/U6-U5 tri-snRNP complex composed of the U4, U6 and U5 snRNAs and at least PRPF3, PRPF4, PRPF6, PRPF8, PRPF31, SNRNP200, TXNL4A, SNRNP40, SNRPB, SNRPD1, SNRPD2, SNRPD3, SNRPE, SNRPF, SNRPG, DDX23, CD2BP2, PPIH, SNU13, EFTUD2, SART1 and USP39, plus LSM2, LSM3, LSM4, LSM5, LSM6, LSM7 and LSM8.

The protein resides in the nucleus. It catalyses the reaction Thiol-dependent hydrolysis of ester, thioester, amide, peptide and isopeptide bonds formed by the C-terminal Gly of ubiquitin (a 76-residue protein attached to proteins as an intracellular targeting signal).. In terms of biological role, deubiquitinating enzyme that plays a role in many cellular processes including cellular antiviral response, epithelial morphogenesis, DNA repair or B-cell development. Plays a role in pre-mRNA splicing as a component of the U4/U6-U5 tri-snRNP, one of the building blocks of the precatalytic spliceosome. Specifically regulates immunoglobulin gene rearrangement in a spliceosome-dependent manner, which involves modulating chromatin interactions at the Igh locus and therefore plays an essential role in B-cell development. Regulates AURKB mRNA levels, and thereby plays a role in cytokinesis and in the spindle checkpoint. Regulates apoptosis and G2/M cell cycle checkpoint in response to DNA damage by deubiquitinating and stabilizing CHK2. Also plays an important role in DNA repair by controlling the recruitment of XRCC4/LIG4 to DNA double-strand breaks for non-homologous end-joining repair. Participates in antiviral activity by affecting the type I IFN signaling by stabilizing STAT1 and decreasing its 'Lys-6'-linked ubiquitination. Contributes to non-canonical Wnt signaling during epidermal differentiation. Acts as a negative regulator NF-kappa-B activation through deubiquitination of 'Lys-48'-linked ubiquitination of NFKBIA. This is Ubiquitin carboxyl-terminal hydrolase 39 from Mus musculus (Mouse).